Here is a 99-residue protein sequence, read N- to C-terminus: Putative membrane protein insertion efficiency factor (99 aa).

This sequence belongs to the UPF0161 family.

It localises to the cell membrane. In terms of biological role, could be involved in insertion of integral membrane proteins into the membrane. This is Putative membrane protein insertion efficiency factor from Corynebacterium glutamicum (strain ATCC 13032 / DSM 20300 / JCM 1318 / BCRC 11384 / CCUG 27702 / LMG 3730 / NBRC 12168 / NCIMB 10025 / NRRL B-2784 / 534).